Here is a 170-residue protein sequence, read N- to C-terminus: Photosystem I assembly protein Ycf3 (170 aa).

TPR repeat units lie at residues 35–68, 72–105, and 120–153; these read AFCY…EEDP, SYII…NPRL, and GLKA…APNN.

The protein belongs to the Ycf3 family.

The protein localises to the plastid. It is found in the chloroplast thylakoid membrane. Essential for the assembly of the photosystem I (PSI) complex. May act as a chaperone-like factor to guide the assembly of the PSI subunits. This is Photosystem I assembly protein Ycf3 from Gracilaria tenuistipitata var. liui (Red alga).